The following is a 607-amino-acid chain: Elongation factor 4 (607 aa).

The tr-type G domain occupies Ser-11–Thr-193. GTP contacts are provided by residues Asp-23–Thr-28 and Asn-140–Asp-143.

This sequence belongs to the TRAFAC class translation factor GTPase superfamily. Classic translation factor GTPase family. LepA subfamily.

Its subcellular location is the cell membrane. The enzyme catalyses GTP + H2O = GDP + phosphate + H(+). In terms of biological role, required for accurate and efficient protein synthesis under certain stress conditions. May act as a fidelity factor of the translation reaction, by catalyzing a one-codon backward translocation of tRNAs on improperly translocated ribosomes. Back-translocation proceeds from a post-translocation (POST) complex to a pre-translocation (PRE) complex, thus giving elongation factor G a second chance to translocate the tRNAs correctly. Binds to ribosomes in a GTP-dependent manner. In Bacillus anthracis (strain CDC 684 / NRRL 3495), this protein is Elongation factor 4.